The chain runs to 872 residues: Alanine--tRNA ligase (872 aa).

Zn(2+) contacts are provided by His-563, His-567, Cys-665, and His-669.

The protein belongs to the class-II aminoacyl-tRNA synthetase family. It depends on Zn(2+) as a cofactor.

The protein localises to the cytoplasm. The catalysed reaction is tRNA(Ala) + L-alanine + ATP = L-alanyl-tRNA(Ala) + AMP + diphosphate. Catalyzes the attachment of alanine to tRNA(Ala) in a two-step reaction: alanine is first activated by ATP to form Ala-AMP and then transferred to the acceptor end of tRNA(Ala). Also edits incorrectly charged Ser-tRNA(Ala) and Gly-tRNA(Ala) via its editing domain. This is Alanine--tRNA ligase from Bacteroides fragilis (strain ATCC 25285 / DSM 2151 / CCUG 4856 / JCM 11019 / LMG 10263 / NCTC 9343 / Onslow / VPI 2553 / EN-2).